The chain runs to 171 residues: MTDPRHTVRIAVGATALGVSALGATLPACSAHSGPGSPPSAPSAPAAATVMVEGHTHTISGVVECRTSPAVRTATPSESGTQTTRVNAHDDSASVTLSLSDSTPPDVNGFGISLKIGSVDYQMPYQPVQSPTQVEATRQGKSYTLTGTGHAVIPGQTGMRELPFGVHVTCP.

The signal sequence occupies residues 1–28 (MTDPRHTVRIAVGATALGVSALGATLPA). A lipid anchor (N-palmitoyl cysteine) is attached at Cys-29. The S-diacylglycerol cysteine moiety is linked to residue Cys-29.

It localises to the cell membrane. The sequence is that of Putative lipoprotein LppO (lppO) from Mycobacterium tuberculosis (strain CDC 1551 / Oshkosh).